The chain runs to 215 residues: Oligoribonuclease (215 aa).

The Exonuclease domain occupies 5–170; that stretch reads LVWIDCEMTG…ADIHESIREL (166 aa). The active site involves Y127. The segment at 196 to 215 is disordered; it reads LDEGKDAPGPSDSASAPPTG. Over residues 202 to 215 the composition is skewed to low complexity; the sequence is APGPSDSASAPPTG.

The protein belongs to the oligoribonuclease family.

The protein resides in the cytoplasm. Its function is as follows. 3'-to-5' exoribonuclease specific for small oligoribonucleotides. This chain is Oligoribonuclease, found in Mycolicibacterium paratuberculosis (strain ATCC BAA-968 / K-10) (Mycobacterium paratuberculosis).